Consider the following 288-residue polypeptide: Diaminopimelate epimerase (288 aa).

The substrate site is built by asparagine 14 and asparagine 67. Cysteine 76 functions as the Proton donor in the catalytic mechanism. Residues 77 to 78, asparagine 166, asparagine 199, and 217 to 218 each bind substrate; these read GN and ER. Residue cysteine 226 is the Proton acceptor of the active site. 227–228 lines the substrate pocket; the sequence is GT.

This sequence belongs to the diaminopimelate epimerase family. In terms of assembly, homodimer.

Its subcellular location is the cytoplasm. It carries out the reaction (2S,6S)-2,6-diaminopimelate = meso-2,6-diaminopimelate. Its pathway is amino-acid biosynthesis; L-lysine biosynthesis via DAP pathway; DL-2,6-diaminopimelate from LL-2,6-diaminopimelate: step 1/1. Its function is as follows. Catalyzes the stereoinversion of LL-2,6-diaminopimelate (L,L-DAP) to meso-diaminopimelate (meso-DAP), a precursor of L-lysine and an essential component of the bacterial peptidoglycan. This chain is Diaminopimelate epimerase, found in Bacillus cereus (strain ATCC 14579 / DSM 31 / CCUG 7414 / JCM 2152 / NBRC 15305 / NCIMB 9373 / NCTC 2599 / NRRL B-3711).